Reading from the N-terminus, the 265-residue chain is 4-diphosphocytidyl-2-C-methyl-D-erythritol kinase (265 aa).

Lys8 is an active-site residue. 95–105 (PIGAGLGGGSS) lines the ATP pocket. Residue Asp135 is part of the active site.

This sequence belongs to the GHMP kinase family. IspE subfamily.

It carries out the reaction 4-CDP-2-C-methyl-D-erythritol + ATP = 4-CDP-2-C-methyl-D-erythritol 2-phosphate + ADP + H(+). It functions in the pathway isoprenoid biosynthesis; isopentenyl diphosphate biosynthesis via DXP pathway; isopentenyl diphosphate from 1-deoxy-D-xylulose 5-phosphate: step 3/6. Catalyzes the phosphorylation of the position 2 hydroxy group of 4-diphosphocytidyl-2C-methyl-D-erythritol. This chain is 4-diphosphocytidyl-2-C-methyl-D-erythritol kinase, found in Ureaplasma urealyticum serovar 10 (strain ATCC 33699 / Western).